We begin with the raw amino-acid sequence, 288 residues long: Heme oxygenase 1 (288 aa).

Residues 1–265 lie on the Cytoplasmic side of the membrane; the sequence is MERPQPDSMP…KTPLNTHSQA (265 aa). K18, H25, Y134, and R183 together coordinate heme b. The tract at residues 223 to 260 is disordered; the sequence is HDTKDQSPSRAPGLRQRASNKAQDSAPVETPRGKTPLN. At S229 the chain carries Phosphoserine. The helical; Anchor for type IV membrane protein transmembrane segment at 266–288 threads the bilayer; the sequence is PLLRWVLTLSFLVATVAVGLYAM.

This sequence belongs to the heme oxygenase family. Homodimer and higher order homooligomer. Oligomerization is crucial for its stability and function in the endoplasmic reticulum. Interacts with FLVCR2; this interaction is potentiated in the presence of heme. A soluble form arises by proteolytic removal of the membrane anchor.

It is found in the endoplasmic reticulum membrane. The catalysed reaction is heme b + 3 reduced [NADPH--hemoprotein reductase] + 3 O2 = biliverdin IXalpha + CO + Fe(2+) + 3 oxidized [NADPH--hemoprotein reductase] + 3 H2O + H(+). Functionally, catalyzes the oxidative cleavage of heme at the alpha-methene bridge carbon, released as carbon monoxide (CO), to generate biliverdin IXalpha, while releasing the central heme iron chelate as ferrous iron. Affords protection against programmed cell death and this cytoprotective effect relies on its ability to catabolize free heme and prevent it from sensitizing cells to undergo apoptosis. Catalyzes the oxidative cleavage of heme at the alpha-methene bridge carbon, released as carbon monoxide (CO), to generate biliverdin IXalpha, while releasing the central heme iron chelate as ferrous iron. In Pongo abelii (Sumatran orangutan), this protein is Heme oxygenase 1 (HMOX1).